The sequence spans 306 residues: tRNA dimethylallyltransferase 2 (306 aa).

11–18 serves as a coordination point for ATP; the sequence is GPTASGKT. 13 to 18 provides a ligand contact to substrate; the sequence is TASGKT. Residues 36 to 39 are interaction with substrate tRNA; it reads DSRQ.

This sequence belongs to the IPP transferase family. In terms of assembly, monomer. Mg(2+) serves as cofactor.

It carries out the reaction adenosine(37) in tRNA + dimethylallyl diphosphate = N(6)-dimethylallyladenosine(37) in tRNA + diphosphate. In terms of biological role, catalyzes the transfer of a dimethylallyl group onto the adenine at position 37 in tRNAs that read codons beginning with uridine, leading to the formation of N6-(dimethylallyl)adenosine (i(6)A). This is tRNA dimethylallyltransferase 2 from Bacteroides thetaiotaomicron (strain ATCC 29148 / DSM 2079 / JCM 5827 / CCUG 10774 / NCTC 10582 / VPI-5482 / E50).